The primary structure comprises 786 residues: Endonuclease MutS2 (786 aa).

Residue 335–342 (GPNTGGKT) coordinates ATP. The region spanning 711 to 786 (LDLRGERFEN…GLGVTVVELK (76 aa)) is the Smr domain.

Belongs to the DNA mismatch repair MutS family. MutS2 subfamily. Homodimer. Binds to stalled ribosomes, contacting rRNA.

Endonuclease that is involved in the suppression of homologous recombination and thus may have a key role in the control of bacterial genetic diversity. Its function is as follows. Acts as a ribosome collision sensor, splitting the ribosome into its 2 subunits. Detects stalled/collided 70S ribosomes which it binds and splits by an ATP-hydrolysis driven conformational change. Acts upstream of the ribosome quality control system (RQC), a ribosome-associated complex that mediates the extraction of incompletely synthesized nascent chains from stalled ribosomes and their subsequent degradation. Probably generates substrates for RQC. The chain is Endonuclease MutS2 from Bacillus anthracis (strain A0248).